The chain runs to 545 residues: Chaperonin GroEL 2 (545 aa).

Residues 29–32 (TLGP), 86–90 (DGTTT), Gly413, 477–479 (DAA), and Asp493 contribute to the ATP site. The tract at residues 526-545 (PEPAAAGHGHGHGHQHGPGF) is disordered. Residues 534–545 (GHGHGHQHGPGF) are compositionally biased toward basic residues.

It belongs to the chaperonin (HSP60) family. As to quaternary structure, forms a cylinder of 14 subunits composed of two heptameric rings stacked back-to-back. Interacts with the co-chaperonin GroES.

The protein resides in the cytoplasm. The catalysed reaction is ATP + H2O + a folded polypeptide = ADP + phosphate + an unfolded polypeptide.. In terms of biological role, together with its co-chaperonin GroES, plays an essential role in assisting protein folding. The GroEL-GroES system forms a nano-cage that allows encapsulation of the non-native substrate proteins and provides a physical environment optimized to promote and accelerate protein folding. The polypeptide is Chaperonin GroEL 2 (Salinispora arenicola (strain CNS-205)).